A 150-amino-acid polypeptide reads, in one-letter code: Protein-export protein SecB (150 aa).

Belongs to the SecB family. In terms of assembly, homotetramer, a dimer of dimers. One homotetramer interacts with 1 SecA dimer.

It localises to the cytoplasm. One of the proteins required for the normal export of preproteins out of the cell cytoplasm. It is a molecular chaperone that binds to a subset of precursor proteins, maintaining them in a translocation-competent state. It also specifically binds to its receptor SecA. The polypeptide is Protein-export protein SecB (Chromobacterium violaceum (strain ATCC 12472 / DSM 30191 / JCM 1249 / CCUG 213 / NBRC 12614 / NCIMB 9131 / NCTC 9757 / MK)).